A 497-amino-acid polypeptide reads, in one-letter code: 4,4'-diaponeurosporene oxygenase (497 aa).

Residue 7 to 19 (VIGGGLGGISAAI) participates in FAD binding.

Belongs to the carotenoid/retinoid oxidoreductase family. CrtP subfamily. The cofactor is FAD.

It catalyses the reaction all-trans-4,4'-diaponeurosporene + 2 AH2 + 2 O2 = 4,4'-diaponeurosporenal + 2 A + 3 H2O. It functions in the pathway carotenoid biosynthesis; staphyloxanthin biosynthesis; staphyloxanthin from farnesyl diphosphate: step 3/5. Functionally, involved in the biosynthesis of the yellow-orange carotenoid staphyloxanthin, which plays a role in the virulence via its protective function against oxidative stress. Catalyzes the oxidation of the terminal methyl side group of 4,4'-diaponeurosporene to form 4,4'-diaponeurosporen-4-al. This Staphylococcus aureus (strain MRSA252) protein is 4,4'-diaponeurosporene oxygenase.